Here is a 169-residue protein sequence, read N- to C-terminus: Putative antitoxin Rv0268c (169 aa).

The segment covering 1-11 (MGTRSKSRTRQ) has biased composition (basic residues). Residues 1–35 (MGTRSKSRTRQLKQSNGCTATTSGASDRRRRARRR) form a disordered region. Positions 120–153 (AAILISAERYESLMEELEDLRDRLSVHEREHVTM) form a coiled coil.

It belongs to the phD/YefM antitoxin family.

Putative antitoxin component of a type II toxin-antitoxin (TA) system; however the expected toxin coding sequence is not found adjacent to this gene. This is Putative antitoxin Rv0268c from Mycobacterium tuberculosis (strain ATCC 25618 / H37Rv).